We begin with the raw amino-acid sequence, 73 residues long: Protein SlyX homolog (73 aa).

It belongs to the SlyX family.

The protein is Protein SlyX homolog of Haemophilus ducreyi (strain 35000HP / ATCC 700724).